We begin with the raw amino-acid sequence, 135 residues long: Large-conductance mechanosensitive channel (135 aa).

The next 2 membrane-spanning stretches (helical) occupy residues 10-30 (FAMR…GAFG) and 76-96 (GSFI…FCVI).

Belongs to the MscL family. Homopentamer.

It is found in the cell inner membrane. In terms of biological role, channel that opens in response to stretch forces in the membrane lipid bilayer. May participate in the regulation of osmotic pressure changes within the cell. The chain is Large-conductance mechanosensitive channel from Campylobacter concisus (strain 13826).